Here is a 284-residue protein sequence, read N- to C-terminus: MEMO1 family protein YG5714_2180 (284 aa).

Belongs to the MEMO1 family.

In Saccharolobus islandicus (strain Y.G.57.14 / Yellowstone #1) (Sulfolobus islandicus), this protein is MEMO1 family protein YG5714_2180.